Reading from the N-terminus, the 151-residue chain is MIQELKADLNGKGQKHCVIVSRFNEFITESLLKGALESFRMHGVEDVTVVRVPGAYEMPVVVSKAAASKKYDSIVCLGAVIRGATAHFDLVAGESAKIGSIGVQHSIPVIFGVLTTDTIEQAIERAGTKAGNKGAEAAATAVEMVNLLSLL.

5-amino-6-(D-ribitylamino)uracil contacts are provided by residues Phe23, 55 to 57, and 79 to 81; these read AYE and AVI. 84–85 lines the (2S)-2-hydroxy-3-oxobutyl phosphate pocket; sequence AT. Residue His87 is the Proton donor of the active site. Position 111 (Phe111) interacts with 5-amino-6-(D-ribitylamino)uracil. (2S)-2-hydroxy-3-oxobutyl phosphate is bound at residue Arg125.

It belongs to the DMRL synthase family.

The enzyme catalyses (2S)-2-hydroxy-3-oxobutyl phosphate + 5-amino-6-(D-ribitylamino)uracil = 6,7-dimethyl-8-(1-D-ribityl)lumazine + phosphate + 2 H2O + H(+). It functions in the pathway cofactor biosynthesis; riboflavin biosynthesis; riboflavin from 2-hydroxy-3-oxobutyl phosphate and 5-amino-6-(D-ribitylamino)uracil: step 1/2. Catalyzes the formation of 6,7-dimethyl-8-ribityllumazine by condensation of 5-amino-6-(D-ribitylamino)uracil with 3,4-dihydroxy-2-butanone 4-phosphate. This is the penultimate step in the biosynthesis of riboflavin. The sequence is that of 6,7-dimethyl-8-ribityllumazine synthase from Leptospira interrogans serogroup Icterohaemorrhagiae serovar copenhageni (strain Fiocruz L1-130).